The following is a 1009-amino-acid chain: Translation initiation factor IF-2 (1009 aa).

Residues 1 to 415 (MSDENENGRP…EREKEKRRGG (415 aa)) are disordered. Over residues 94-110 (EELRARQRVVDAAREAQ) the composition is skewed to basic and acidic residues. The span at 111–121 (ARQVAEQAAAE) shows a compositional bias: low complexity. The segment covering 122-136 (ARARAAQEAAQREAA) has biased composition (basic and acidic residues). The span at 137–146 (AKAAAERAAA) shows a compositional bias: low complexity. Residues 147-174 (APPPVAQAPAAPAPAAPVTPPPAAPQAP) show a composition bias toward pro residues. The segment covering 175–189 (RPVAQAPVAPSAPRQ) has biased composition (low complexity). Composition is skewed to basic and acidic residues over residues 208–218 (EPSRDRRDDRP) and 251–287 (PRPEGDRPRGPRPDGDRPQGDRGGYRGDRPQGDRPQG). Pro residues predominate over residues 311 to 320 (GGPPRGPRPG). Composition is skewed to basic and acidic residues over residues 346–358 (MDRRPDEDDDRRK) and 403–415 (RAREREKEKRRGG). The tr-type G domain occupies 505–675 (LRPPVVTIMG…LLQAEVLDLK (171 aa)). Residues 514–521 (GHVDHGKT) form a G1 region. A GTP-binding site is contributed by 514–521 (GHVDHGKT). Residues 539 to 543 (GITQH) form a G2 region. The tract at residues 561-564 (DTPG) is G3. Residues 561 to 565 (DTPGH) and 615 to 618 (NKMD) contribute to the GTP site. A G4 region spans residues 615-618 (NKMD). The G5 stretch occupies residues 651–653 (SAK).

The protein belongs to the TRAFAC class translation factor GTPase superfamily. Classic translation factor GTPase family. IF-2 subfamily.

The protein localises to the cytoplasm. Functionally, one of the essential components for the initiation of protein synthesis. Protects formylmethionyl-tRNA from spontaneous hydrolysis and promotes its binding to the 30S ribosomal subunits. Also involved in the hydrolysis of GTP during the formation of the 70S ribosomal complex. The protein is Translation initiation factor IF-2 of Caulobacter vibrioides (strain ATCC 19089 / CIP 103742 / CB 15) (Caulobacter crescentus).